A 237-amino-acid chain; its full sequence is 1-(5-phosphoribosyl)-5-[(5-phosphoribosylamino)methylideneamino] imidazole-4-carboxamide isomerase (237 aa).

Residue D8 is the Proton acceptor of the active site. D129 (proton donor) is an active-site residue.

This sequence belongs to the HisA/HisF family.

Its subcellular location is the cytoplasm. It carries out the reaction 1-(5-phospho-beta-D-ribosyl)-5-[(5-phospho-beta-D-ribosylamino)methylideneamino]imidazole-4-carboxamide = 5-[(5-phospho-1-deoxy-D-ribulos-1-ylimino)methylamino]-1-(5-phospho-beta-D-ribosyl)imidazole-4-carboxamide. It functions in the pathway amino-acid biosynthesis; L-histidine biosynthesis; L-histidine from 5-phospho-alpha-D-ribose 1-diphosphate: step 4/9. The protein is 1-(5-phosphoribosyl)-5-[(5-phosphoribosylamino)methylideneamino] imidazole-4-carboxamide isomerase of Alkaliphilus metalliredigens (strain QYMF).